The primary structure comprises 58 residues: Preprotein translocase subunit SecG (58 aa).

The Cytoplasmic segment spans residues 1–32 (MAQKKKSSGSGLMSSAGLMTYYDADKKAIHVQ). Residues 33 to 54 (PKTVFIFGAICGIVILAFSAGF) form a helical membrane-spanning segment. Residues 55–58 (GLWP) lie on the Extracellular side of the membrane.

The protein belongs to the SEC61-beta family. As to quaternary structure, component of the protein translocase complex. Heterotrimer consisting of alpha (SecY), beta (SecG) and gamma (SecE) subunits. Can form oligomers of the heterotrimer.

It localises to the cell membrane. Its function is as follows. Involved in protein export. The function of the beta subunit is unknown, but it may be involved in stabilization of the trimeric complex. The sequence is that of Preprotein translocase subunit SecG from Methanococcoides burtonii (strain DSM 6242 / NBRC 107633 / OCM 468 / ACE-M).